The chain runs to 265 residues: tRNA (guanine-N(7)-)-methyltransferase (265 aa).

The disordered stretch occupies residues 1–40; that stretch reads MIHDDDPNAPGAPHDDDATAAPASATRAAPAAGDDDDANP. Residues 19 to 32 show a composition bias toward low complexity; it reads TAAPASATRAAPAA. The S-adenosyl-L-methionine site is built by glutamate 95, glutamate 120, aspartate 147, and aspartate 170. The active site involves aspartate 170. Substrate is bound by residues lysine 174, aspartate 206, and 241-244; that span reads TKFE.

It belongs to the class I-like SAM-binding methyltransferase superfamily. TrmB family.

It carries out the reaction guanosine(46) in tRNA + S-adenosyl-L-methionine = N(7)-methylguanosine(46) in tRNA + S-adenosyl-L-homocysteine. It functions in the pathway tRNA modification; N(7)-methylguanine-tRNA biosynthesis. Its function is as follows. Catalyzes the formation of N(7)-methylguanine at position 46 (m7G46) in tRNA. The sequence is that of tRNA (guanine-N(7)-)-methyltransferase from Burkholderia pseudomallei (strain 1710b).